The primary structure comprises 188 residues: Protein TIFY 9 (188 aa).

The disordered stretch occupies residues 20-41 (DADDRHAKSGGSSASSSSSIRG). Residues 28-38 (SGGSSASSSSS) are compositionally biased toward low complexity. In terms of domain architecture, Tify spans 80–114 (AAAAAAPMTLFYNGSVAVFDVSHDKAEAIMRMATE). Positions 135–160 (PLTRTKSLQRFLSKRKERLTSLGPYQ) match the Jas motif. The segment at 156–188 (LGPYQVGGPAAVGATTSTTTKSFLAKEEEHTAS) is disordered. Over residues 179–188 (LAKEEEHTAS) the composition is skewed to basic and acidic residues.

Belongs to the TIFY/JAZ family. Interacts with COI1A and COI2 in a coronatine-dependent manner. Coronatine is an analog of jasmonoyl isoleucine (JA-Ile). In terms of processing, ubiquitinated. Targeted for degradation by the SCF(COI1) E3 ubiquitin ligase-proteasome pathway during jasmonate signaling.

In terms of biological role, repressor of jasmonate responses. This Oryza sativa subsp. japonica (Rice) protein is Protein TIFY 9.